A 364-amino-acid chain; its full sequence is Molybdenum import ATP-binding protein ModC (364 aa).

The region spanning 1 to 229 (MLLIDIKKQL…PLMRPWLNAS (229 aa)) is the ABC transporter domain. 31-38 (GRSGAGKS) is a binding site for ATP. The Mop domain occupies 293–360 (HSSIRNILPV…IKGVSVTQSD (68 aa)).

It belongs to the ABC transporter superfamily. Molybdate importer (TC 3.A.1.8) family. As to quaternary structure, the complex is composed of two ATP-binding proteins (ModC), two transmembrane proteins (ModB) and a solute-binding protein (ModA).

The protein resides in the cell inner membrane. It carries out the reaction molybdate(out) + ATP + H2O = molybdate(in) + ADP + phosphate + H(+). Functionally, part of the ABC transporter complex ModABC involved in molybdenum import. Responsible for energy coupling to the transport system. The chain is Molybdenum import ATP-binding protein ModC from Aliivibrio fischeri (strain ATCC 700601 / ES114) (Vibrio fischeri).